The chain runs to 613 residues: Transcription factor cbf11 (613 aa).

Positions 32–58 (NNGLHNQEDGAGGRNENSERVGSGSPG) are disordered.

The protein belongs to the Su(H) family.

The protein resides in the cytoplasm. It is found in the nucleus. Transcription factor that behaves as a negative regulator of adhesion. Recognizes specifically the canonical CSL response element GTGA/GGAA. May also play a cbf12-antagonistic role in the regulation of a number of other important processes such as extracellular material production, colony morphogenesis, ploidy maintenance, or meiosis. This is Transcription factor cbf11 (cbf11) from Schizosaccharomyces pombe (strain 972 / ATCC 24843) (Fission yeast).